The sequence spans 524 residues: Probable plastidic glucose transporter 1 (524 aa).

Transmembrane regions (helical) follow at residues 88–108 (MANF…VSIA), 122–142 (LVVS…GPLV), 151–171 (FQIF…AHSL), 179–199 (FLVG…ISEV), 208–228 (LGTL…LLGI), 239–259 (TMLY…QFAV), 320–340 (VAFI…NGVL), 357–377 (QASL…SYLI), 386–406 (LIGS…AVGF), 420–440 (GTLM…GLII), 452–472 (IMGF…LFFL), and 483–503 (VYAS…LFTV).

This sequence belongs to the major facilitator superfamily. Sugar transporter (TC 2.A.1.1) family.

It is found in the plastid. Its subcellular location is the chloroplast membrane. May be involved in the efflux of glucose towards the cytosol. The sequence is that of Probable plastidic glucose transporter 1 from Arabidopsis thaliana (Mouse-ear cress).